Reading from the N-terminus, the 750-residue chain is Photosystem I P700 chlorophyll a apoprotein A1 (750 aa).

8 helical membrane-spanning segments follow: residues 70 to 93 (VFSAHFGQLAVIFIWLSGMYFHGA), 156 to 179 (LYTTAIGGLIFAALMLFAGWFHYH), 195 to 219 (LNHHLAGLLGLGSLAWAGHQVHVSL), 291 to 309 (TAHHHLAIAVLFLVAGHMY), 346 to 369 (WHAQLAINLAMLGSLTIIVAHHMY), 385 to 411 (LSLFTHHMWIGGFLVVGAAAHAAIFMV), 433 to 455 (AIISHLNWVCIFLGFHSFGLYIH), and 531 to 549 (FLVHHIHAFTIHVTVLILL). Positions 573 and 582 each coordinate [4Fe-4S] cluster. A run of 2 helical transmembrane segments spans residues 589–610 (HVFLGLFWMYNAISVVIFHFSW) and 664–686 (LSAYGLLFLGAHFVWAFSLMFLF). H675 provides a ligand contact to chlorophyll a'. Chlorophyll a is bound by residues M683 and Y691. A phylloquinone-binding site is contributed by W692. Residues 724–744 (AVGVAHYLLGGIATTWAFFLA) traverse the membrane as a helical segment.

It belongs to the PsaA/PsaB family. In terms of assembly, the PsaA/B heterodimer binds the P700 chlorophyll special pair and subsequent electron acceptors. PSI consists of a core antenna complex that captures photons, and an electron transfer chain that converts photonic excitation into a charge separation. The eukaryotic PSI reaction center is composed of at least 11 subunits. The cofactor is P700 is a chlorophyll a/chlorophyll a' dimer, A0 is one or more chlorophyll a, A1 is one or both phylloquinones and FX is a shared 4Fe-4S iron-sulfur center..

It localises to the plastid. Its subcellular location is the chloroplast thylakoid membrane. The catalysed reaction is reduced [plastocyanin] + hnu + oxidized [2Fe-2S]-[ferredoxin] = oxidized [plastocyanin] + reduced [2Fe-2S]-[ferredoxin]. PsaA and PsaB bind P700, the primary electron donor of photosystem I (PSI), as well as the electron acceptors A0, A1 and FX. PSI is a plastocyanin-ferredoxin oxidoreductase, converting photonic excitation into a charge separation, which transfers an electron from the donor P700 chlorophyll pair to the spectroscopically characterized acceptors A0, A1, FX, FA and FB in turn. Oxidized P700 is reduced on the lumenal side of the thylakoid membrane by plastocyanin. This Physcomitrium patens (Spreading-leaved earth moss) protein is Photosystem I P700 chlorophyll a apoprotein A1.